The chain runs to 179 residues: Large ribosomal subunit protein uL5 (179 aa).

This sequence belongs to the universal ribosomal protein uL5 family. As to quaternary structure, part of the 50S ribosomal subunit; part of the 5S rRNA/L5/L18/L25 subcomplex. Contacts the 5S rRNA and the P site tRNA. Forms a bridge to the 30S subunit in the 70S ribosome.

Functionally, this is one of the proteins that bind and probably mediate the attachment of the 5S RNA into the large ribosomal subunit, where it forms part of the central protuberance. In the 70S ribosome it contacts protein S13 of the 30S subunit (bridge B1b), connecting the 2 subunits; this bridge is implicated in subunit movement. Contacts the P site tRNA; the 5S rRNA and some of its associated proteins might help stabilize positioning of ribosome-bound tRNAs. This is Large ribosomal subunit protein uL5 from Chromobacterium violaceum (strain ATCC 12472 / DSM 30191 / JCM 1249 / CCUG 213 / NBRC 12614 / NCIMB 9131 / NCTC 9757 / MK).